The primary structure comprises 338 residues: Replication factor C subunit 3 (338 aa).

Gly57–Thr64 is an ATP binding site.

Belongs to the activator 1 small subunits family. Heteropentamer of subunits RFC1, RFC2, RFC3, RFC4 and RFC5 that forms a complex with PCNA in the presence of ATP.

The protein localises to the nucleus. The elongation of primed DNA templates by DNA polymerase delta and epsilon requires the action of the accessory proteins proliferating cell nuclear antigen (PCNA) and activator 1. Subunit 3 binds ATP. The chain is Replication factor C subunit 3 (RFC3) from Blastobotrys adeninivorans (Yeast).